The chain runs to 758 residues: 5-methyltetrahydropteroyltriglutamate--homocysteine methyltransferase (758 aa).

5-methyltetrahydropteroyltri-L-glutamate contacts are provided by residues 17-20 (RELK) and Lys-117. L-homocysteine-binding positions include 434 to 436 (IGS) and Glu-487. Residues 434–436 (IGS) and Glu-487 each bind L-methionine. Residues 518 to 519 (RC) and Trp-564 each bind 5-methyltetrahydropteroyltri-L-glutamate. Asp-602 is a binding site for L-homocysteine. Asp-602 contacts L-methionine. Glu-608 provides a ligand contact to 5-methyltetrahydropteroyltri-L-glutamate. Zn(2+) is bound by residues His-644, Cys-646, and Glu-668. His-697 functions as the Proton donor in the catalytic mechanism. Position 729 (Cys-729) interacts with Zn(2+).

It belongs to the vitamin-B12 independent methionine synthase family. It depends on Zn(2+) as a cofactor.

The enzyme catalyses 5-methyltetrahydropteroyltri-L-glutamate + L-homocysteine = tetrahydropteroyltri-L-glutamate + L-methionine. It participates in amino-acid biosynthesis; L-methionine biosynthesis via de novo pathway; L-methionine from L-homocysteine (MetE route): step 1/1. In terms of biological role, catalyzes the transfer of a methyl group from 5-methyltetrahydrofolate to homocysteine resulting in methionine formation. The polypeptide is 5-methyltetrahydropteroyltriglutamate--homocysteine methyltransferase (Yersinia pestis (strain Pestoides F)).